The following is a 185-amino-acid chain: Elongation factor P (185 aa).

It belongs to the elongation factor P family.

The protein localises to the cytoplasm. The protein operates within protein biosynthesis; polypeptide chain elongation. Functionally, involved in peptide bond synthesis. Stimulates efficient translation and peptide-bond synthesis on native or reconstituted 70S ribosomes in vitro. Probably functions indirectly by altering the affinity of the ribosome for aminoacyl-tRNA, thus increasing their reactivity as acceptors for peptidyl transferase. This Deinococcus deserti (strain DSM 17065 / CIP 109153 / LMG 22923 / VCD115) protein is Elongation factor P.